Here is a 352-residue protein sequence, read N- to C-terminus: UDP-3-O-acylglucosamine N-acyltransferase (352 aa).

H244 acts as the Proton acceptor in catalysis.

The protein belongs to the transferase hexapeptide repeat family. LpxD subfamily. Homotrimer.

The enzyme catalyses a UDP-3-O-[(3R)-3-hydroxyacyl]-alpha-D-glucosamine + a (3R)-hydroxyacyl-[ACP] = a UDP-2-N,3-O-bis[(3R)-3-hydroxyacyl]-alpha-D-glucosamine + holo-[ACP] + H(+). It functions in the pathway bacterial outer membrane biogenesis; LPS lipid A biosynthesis. In terms of biological role, catalyzes the N-acylation of UDP-3-O-acylglucosamine using 3-hydroxyacyl-ACP as the acyl donor. Is involved in the biosynthesis of lipid A, a phosphorylated glycolipid that anchors the lipopolysaccharide to the outer membrane of the cell. The sequence is that of UDP-3-O-acylglucosamine N-acyltransferase from Leptospira biflexa serovar Patoc (strain Patoc 1 / Ames).